Reading from the N-terminus, the 375-residue chain is Putative F-box protein At1g12190 (375 aa).

Positions 1 to 46 (MACVKFPWELMEEILYRVPSLSLSRFKTVSKEWNTLLNDKTFIKKH) constitute an F-box domain.

This chain is Putative F-box protein At1g12190, found in Arabidopsis thaliana (Mouse-ear cress).